We begin with the raw amino-acid sequence, 309 residues long: Aspartate carbamoyltransferase catalytic subunit (309 aa).

R59 and T60 together coordinate carbamoyl phosphate. K87 provides a ligand contact to L-aspartate. Positions 109, 139, and 142 each coordinate carbamoyl phosphate. Positions 172 and 224 each coordinate L-aspartate. The carbamoyl phosphate site is built by A265 and P266.

The protein belongs to the aspartate/ornithine carbamoyltransferase superfamily. ATCase family. Heterododecamer (2C3:3R2) of six catalytic PyrB chains organized as two trimers (C3), and six regulatory PyrI chains organized as three dimers (R2).

The catalysed reaction is carbamoyl phosphate + L-aspartate = N-carbamoyl-L-aspartate + phosphate + H(+). It functions in the pathway pyrimidine metabolism; UMP biosynthesis via de novo pathway; (S)-dihydroorotate from bicarbonate: step 2/3. Its function is as follows. Catalyzes the condensation of carbamoyl phosphate and aspartate to form carbamoyl aspartate and inorganic phosphate, the committed step in the de novo pyrimidine nucleotide biosynthesis pathway. This is Aspartate carbamoyltransferase catalytic subunit from Streptococcus uberis (strain ATCC BAA-854 / 0140J).